Reading from the N-terminus, the 179-residue chain is ATP synthase subunit b (179 aa).

A helical membrane pass occupies residues 23–43 (IVVGLVAFGLLAFVLMKFVFP).

This sequence belongs to the ATPase B chain family. F-type ATPases have 2 components, F(1) - the catalytic core - and F(0) - the membrane proton channel. F(1) has five subunits: alpha(3), beta(3), gamma(1), delta(1), epsilon(1). F(0) has three main subunits: a(1), b(2) and c(10-14). The alpha and beta chains form an alternating ring which encloses part of the gamma chain. F(1) is attached to F(0) by a central stalk formed by the gamma and epsilon chains, while a peripheral stalk is formed by the delta and b chains.

Its subcellular location is the cell membrane. Its function is as follows. F(1)F(0) ATP synthase produces ATP from ADP in the presence of a proton or sodium gradient. F-type ATPases consist of two structural domains, F(1) containing the extramembraneous catalytic core and F(0) containing the membrane proton channel, linked together by a central stalk and a peripheral stalk. During catalysis, ATP synthesis in the catalytic domain of F(1) is coupled via a rotary mechanism of the central stalk subunits to proton translocation. Component of the F(0) channel, it forms part of the peripheral stalk, linking F(1) to F(0). The sequence is that of ATP synthase subunit b from Salinispora arenicola (strain CNS-205).